We begin with the raw amino-acid sequence, 195 residues long: PBAN-type neuropeptides (195 aa).

A signal peptide spans 1–33 (MIGFAVFSSFNRFTTIFVCVLLCVVYLLSYASG). The propeptide occupies 34-63 (EYDGRDSSSGSNNDRAPSNEFGSCTDGKCI). Residue Leu-80 is modified to Leucine amide. The propeptide occupies 86-117 (ADRKPEINSDIEAFANAFEEPHWAIVTIPETE). Gln-120 bears the Pyrrolidone carboxylic acid mark. Residue Leu-128 is modified to Leucine amide. The propeptide occupies 131–153 (ESGEDYFSYGFPKDQEELYTEEQ). Leucine amide occurs at positions 163 and 175. A propeptide spanning residues 178 to 195 (QLHNIVDKPRQNFNDPRF) is cleaved from the precursor.

The protein belongs to the pyrokinin family.

Its subcellular location is the secreted. Functionally, a hormone that controls sex pheromone production in females and pheromone responsiveness in male. Also mediates visceral muscle contractile activity (myotropic activity). The polypeptide is PBAN-type neuropeptides (Apis mellifera (Honeybee)).